The chain runs to 327 residues: Melanoma-associated antigen B18 (327 aa).

Positions methionine 1 to arginine 19 are enriched in basic residues. Positions methionine 1–aspartate 85 are disordered. Residues methionine 46–glutamine 70 are compositionally biased toward polar residues. The MAGE domain occupies isoleucine 91–alanine 289.

As to quaternary structure, interacts with LNX1. In terms of tissue distribution, expressed in testis, stomach, large intestine, small intestine, spleen, lymph node, bone marrow lymphocytes and blood T-lymphocytes. Not detected in brain, heart, lung, liver or kidney (at protein level).

It localises to the cytoplasm. Its function is as follows. May enhance ubiquitin ligase activity of RING-type zinc finger-containing E3 ubiquitin-protein ligases. Proposed to act through recruitment and/or stabilization of the Ubl-conjugating enzyme (E2) at the E3:substrate complex. This is Melanoma-associated antigen B18 from Mus musculus (Mouse).